Consider the following 219-residue polypeptide: Small ribosomal subunit protein uS3c (219 aa).

The KH type-2 domain maps to 43–118 (IKNYVQKNMK…KLNIAITRIA (76 aa)).

It belongs to the universal ribosomal protein uS3 family. As to quaternary structure, part of the 30S ribosomal subunit.

Its subcellular location is the plastid. It localises to the chloroplast. This Panax ginseng (Korean ginseng) protein is Small ribosomal subunit protein uS3c (rps3).